A 391-amino-acid polypeptide reads, in one-letter code: Polysialic acid biosynthesis protein P7 (391 aa).

Its function is as follows. May be involved in the synthesis of polysialic acid (PSA). The protein is Polysialic acid biosynthesis protein P7 (neuC) of Escherichia coli.